We begin with the raw amino-acid sequence, 283 residues long: MNAWNTIYERFNPIAFSLGSIEVHWYGLAYACAIVIAFYMALRMIQKDPKRFPVARKDFESYFLWAELGIVLGARIGYILIYEPNSSYYLTHFWQIFNPFDSHGNFIGIRGMSYHGGLVGFLIASYLYNRKDLKKLLIYLDLIAISLPLGYVFGRIGNFLNQELVGRIVPKDSHLGQMIGIVVDHELRYPSQLIEAFLEGVIVFLMVMWAKKHTKTHGLLIVVYGLGYSLMRFIAEFYREPDSQLGVYFLNLSMGQILSLFMVIVSLGILLYATKNSKKIKEN.

7 helical membrane-spanning segments follow: residues 21–41 (IEVH…FYMA), 62–82 (YFLW…ILIY), 106–126 (FIGI…IASY), 136–156 (LLIY…FGRI), 190–210 (PSQL…VMWA), 218–238 (GLLI…AEFY), and 252–272 (LSMG…ILLY). Arg-155 lines the a 1,2-diacyl-sn-glycero-3-phospho-(1'-sn-glycerol) pocket.

Belongs to the Lgt family.

The protein localises to the cell inner membrane. It carries out the reaction L-cysteinyl-[prolipoprotein] + a 1,2-diacyl-sn-glycero-3-phospho-(1'-sn-glycerol) = an S-1,2-diacyl-sn-glyceryl-L-cysteinyl-[prolipoprotein] + sn-glycerol 1-phosphate + H(+). It participates in protein modification; lipoprotein biosynthesis (diacylglyceryl transfer). Functionally, catalyzes the transfer of the diacylglyceryl group from phosphatidylglycerol to the sulfhydryl group of the N-terminal cysteine of a prolipoprotein, the first step in the formation of mature lipoproteins. This chain is Phosphatidylglycerol--prolipoprotein diacylglyceryl transferase, found in Helicobacter acinonychis (strain Sheeba).